Consider the following 372-residue polypeptide: Cyanuric acid amidohydrolase (372 aa).

Positions 1-105 (MPTTLRRAHV…IVFEAREVDE (105 aa)) are RU A. Residues arginine 56 and 84 to 85 (SG) contribute to the substrate site. The tract at residues 115–252 (SLALGRARTP…HEIMVAGMSR (138 aa)) is RU B. Lysine 165 is a catalytic residue. Substrate is bound by residues arginine 197 and 235-236 (SG). Residue serine 235 is the Nucleophile of the active site. The interval 258-372 (LAIDHGVMRD…GPVAIIVERT (115 aa)) is RU C. Glutamate 305 provides a ligand contact to Mg(2+). Residues arginine 332 and 351 to 352 (SG) each bind substrate. Residues alanine 354, glutamine 357, glycine 358, proline 359, and glycine 362 each contribute to the Mg(2+) site.

The protein belongs to the cyclic amide hydrolase (CyAH) family. As to quaternary structure, homotetramer.

The catalysed reaction is cyanurate + H2O = 1-carboxybiuret + H(+). It participates in xenobiotic degradation; atrazine degradation; biuret from cyanurate: step 1/1. Its activity is regulated as follows. Inhibited by barbituric acid. Functionally, responsible for the hydrolysis of cyanuric acid, an intermediate formed during catabolism of s-triazine based compounds in herbicides such as atrazine and polymers such as melamine. Catalyzes the hydrolytic opening of the s-triazine ring of cyanuric acid (2,4,6-trihydroxy-s-triazine) to yield carbon dioxide and carboxybiuret, which spontaneously decarboxylates to biuret. The polypeptide is Cyanuric acid amidohydrolase (Bradyrhizobium sp. (strain ORS 375)).